Here is a 216-residue protein sequence, read N- to C-terminus: Pyridoxine/pyridoxamine 5'-phosphate oxidase (216 aa).

Residues 63 to 68, 78 to 79, Lys85, and Gln107 each bind FMN; these read RMVLMK and YS. Lys68 is a binding site for substrate. Residues Tyr125 and Arg129 each coordinate substrate. FMN is bound by residues 142 to 143 and Trp187; that span reads QS. 193 to 195 lines the substrate pocket; that stretch reads RLH. Arg197 lines the FMN pocket.

It belongs to the pyridoxamine 5'-phosphate oxidase family. In terms of assembly, homodimer. FMN serves as cofactor.

It carries out the reaction pyridoxamine 5'-phosphate + O2 + H2O = pyridoxal 5'-phosphate + H2O2 + NH4(+). The catalysed reaction is pyridoxine 5'-phosphate + O2 = pyridoxal 5'-phosphate + H2O2. The protein operates within cofactor metabolism; pyridoxal 5'-phosphate salvage; pyridoxal 5'-phosphate from pyridoxamine 5'-phosphate: step 1/1. Its pathway is cofactor metabolism; pyridoxal 5'-phosphate salvage; pyridoxal 5'-phosphate from pyridoxine 5'-phosphate: step 1/1. Functionally, catalyzes the oxidation of either pyridoxine 5'-phosphate (PNP) or pyridoxamine 5'-phosphate (PMP) into pyridoxal 5'-phosphate (PLP). In Bradyrhizobium sp. (strain ORS 278), this protein is Pyridoxine/pyridoxamine 5'-phosphate oxidase.